Reading from the N-terminus, the 212-residue chain is Riboflavin kinase (212 aa).

The interval 1 to 87 is H-T-H motif-like; it reads MKMKTLFLLI…YEEISTALYS (87 aa). A riboflavin kinase region spans residues 88 to 212; that stretch reads GFIVGEVISG…DGDKVRIEVV (125 aa). 97-102 contributes to the CDP binding site; the sequence is GIGEGA. Residues Thr-124 and Asn-126 each contribute to the Mg(2+) site. FMN is bound by residues Thr-180 and Glu-188. 193–196 provides a ligand contact to CDP; it reads VKLR.

This sequence belongs to the archaeal riboflavin kinase family. Mg(2+) is required as a cofactor.

The enzyme catalyses riboflavin + CTP = CDP + FMN + H(+). It functions in the pathway cofactor biosynthesis; FMN biosynthesis; FMN from riboflavin (CTP route): step 1/1. Functionally, catalyzes the CTP-dependent phosphorylation of riboflavin (vitamin B2) to form flavin mononucleotide (FMN). This chain is Riboflavin kinase (ribK), found in Pyrococcus abyssi (strain GE5 / Orsay).